Here is a 74-residue protein sequence, read N- to C-terminus: Small ribosomal subunit protein eS28 (74 aa).

It belongs to the eukaryotic ribosomal protein eS28 family.

This is Small ribosomal subunit protein eS28 from Halorubrum lacusprofundi (strain ATCC 49239 / DSM 5036 / JCM 8891 / ACAM 34).